We begin with the raw amino-acid sequence, 183 residues long: Glutathione-regulated potassium-efflux system ancillary protein KefG (183 aa).

The protein belongs to the NAD(P)H dehydrogenase (quinone) family. KefG subfamily. Interacts with KefB.

It localises to the cell inner membrane. The enzyme catalyses a quinone + NADH + H(+) = a quinol + NAD(+). It catalyses the reaction a quinone + NADPH + H(+) = a quinol + NADP(+). Its function is as follows. Regulatory subunit of a potassium efflux system that confers protection against electrophiles. Required for full activity of KefB. This is Glutathione-regulated potassium-efflux system ancillary protein KefG from Enterobacter sp. (strain 638).